A 360-amino-acid chain; its full sequence is Peptide chain release factor 1 (360 aa).

Gln236 carries the N5-methylglutamine modification. The disordered stretch occupies residues 288–308; the sequence is QDEQDAERKSTIGTGDRSERI. The span at 293–308 shows a compositional bias: basic and acidic residues; that stretch reads AERKSTIGTGDRSERI.

It belongs to the prokaryotic/mitochondrial release factor family. Methylated by PrmC. Methylation increases the termination efficiency of RF1.

Its subcellular location is the cytoplasm. Functionally, peptide chain release factor 1 directs the termination of translation in response to the peptide chain termination codons UAG and UAA. This chain is Peptide chain release factor 1, found in Streptococcus equi subsp. equi (strain 4047).